The chain runs to 172 residues: Disulfide bond formation protein B (172 aa).

The Cytoplasmic segment spans residues 1–13 (MIIRLAGMSVRQG). Residues 14–30 (CLLGLLMCALMMGVALV) traverse the membrane as a helical segment. Topologically, residues 31 to 48 (LQYVYGLTPCPLCIGQRI) are periplasmic. A disulfide bond links cysteine 40 and cysteine 43. Residues 49-65 (AVLLAAFVFAIGALHNP) traverse the membrane as a helical segment. Residues 66–72 (AGNLGRG) are Cytoplasmic-facing. The chain crosses the membrane as a helical span at residues 73–90 (LYAGLAALASVLGLAVAA). Over 91 to 147 (RHVWLQSLPPENVPSCGPGLDYMMEVLPLWDVLSRVLAGSGECAEIHGSLLGMSIPQ) the chain is Periplasmic. A disulfide bridge connects residues cysteine 106 and cysteine 133. A helical membrane pass occupies residues 148-166 (WTLLGFAVLLLIPLGMLAG). Residues 167–172 (IVIRRR) are Cytoplasmic-facing.

It belongs to the DsbB family.

Its subcellular location is the cell inner membrane. Required for disulfide bond formation in some periplasmic proteins. Acts by oxidizing the DsbA protein. In Chromohalobacter salexigens (strain ATCC BAA-138 / DSM 3043 / CIP 106854 / NCIMB 13768 / 1H11), this protein is Disulfide bond formation protein B.